The sequence spans 540 residues: Probable pectinesterase/pectinesterase inhibitor 60 (540 aa).

A signal peptide spans 1 to 31 (MNIMMVQNISFLSLHLLLILLLCLRPLTTVA). The tract at residues 32 to 185 (DGNSTNIDGW…SHLISNCLAV (154 aa)) is pectinesterase inhibitor 60. N-linked (GlcNAc...) asparagine glycans are attached at residues asparagine 34, asparagine 91, asparagine 95, asparagine 120, asparagine 161, and asparagine 195. The segment at 225–526 (NLVVAKDGSG…FSVGKFIAGT (302 aa)) is pectinesterase 60. Positions 302 and 332 each coordinate substrate. Catalysis depends on aspartate 355, which acts as the Proton donor; for pectinesterase activity. A disulfide bridge connects residues cysteine 369 and cysteine 389. Residue aspartate 376 is the Nucleophile; for pectinesterase activity of the active site. Arginine 444 and tryptophan 446 together coordinate substrate.

This sequence in the N-terminal section; belongs to the PMEI family. It in the C-terminal section; belongs to the pectinesterase family. Expressed in siliques.

The protein localises to the secreted. Its subcellular location is the cell wall. The catalysed reaction is [(1-&gt;4)-alpha-D-galacturonosyl methyl ester](n) + n H2O = [(1-&gt;4)-alpha-D-galacturonosyl](n) + n methanol + n H(+). Its pathway is glycan metabolism; pectin degradation; 2-dehydro-3-deoxy-D-gluconate from pectin: step 1/5. In terms of biological role, acts in the modification of cell walls via demethylesterification of cell wall pectin. In Arabidopsis thaliana (Mouse-ear cress), this protein is Probable pectinesterase/pectinesterase inhibitor 60 (PME60).